We begin with the raw amino-acid sequence, 405 residues long: Arginine biosynthesis bifunctional protein ArgJ (405 aa).

Residues Thr152, Lys178, Thr189, Glu276, Asn400, and Thr405 each coordinate substrate. The Nucleophile role is filled by Thr189.

Belongs to the ArgJ family. Heterotetramer of two alpha and two beta chains.

It is found in the cytoplasm. The catalysed reaction is N(2)-acetyl-L-ornithine + L-glutamate = N-acetyl-L-glutamate + L-ornithine. It catalyses the reaction L-glutamate + acetyl-CoA = N-acetyl-L-glutamate + CoA + H(+). Its pathway is amino-acid biosynthesis; L-arginine biosynthesis; L-ornithine and N-acetyl-L-glutamate from L-glutamate and N(2)-acetyl-L-ornithine (cyclic): step 1/1. It functions in the pathway amino-acid biosynthesis; L-arginine biosynthesis; N(2)-acetyl-L-ornithine from L-glutamate: step 1/4. In terms of biological role, catalyzes two activities which are involved in the cyclic version of arginine biosynthesis: the synthesis of N-acetylglutamate from glutamate and acetyl-CoA as the acetyl donor, and of ornithine by transacetylation between N(2)-acetylornithine and glutamate. The sequence is that of Arginine biosynthesis bifunctional protein ArgJ from Pseudomonas aeruginosa (strain ATCC 15692 / DSM 22644 / CIP 104116 / JCM 14847 / LMG 12228 / 1C / PRS 101 / PAO1).